We begin with the raw amino-acid sequence, 175 residues long: Nucleoplasmin-3 (175 aa).

A2 is modified (N-acetylalanine). S16 is modified (phosphoserine). Residue R27 is modified to Omega-N-methylarginine. 2 positions are modified to phosphoserine: S147 and S151.

Belongs to the nucleoplasmin family. As to quaternary structure, interacts with NPM (via N-terminus). Forms a pentamer with NPM at a ratio 4:1 (NPM3/NPM). Two pentamers form a decamer. Post-translationally, phosphorylated. As to expression, predominantly expressed in testis.

It localises to the nucleus. It is found in the nucleolus. In terms of biological role, plays a role in the regulation of diverse cellular processes such as ribosome biogenesis, chromatin remodeling or protein chaperoning. Modulates the histone chaperone function and the RNA-binding activity of nucleolar phosphoprotein B23/NPM. Efficiently mediates chromatin remodeling when included in a pentamer containing NPM3 and NPM. The polypeptide is Nucleoplasmin-3 (Npm3) (Mus musculus (Mouse)).